The chain runs to 578 residues: Protein LIKE EARLY STARVATION, chloroplastic (578 aa).

The transit peptide at 1–56 (MALRLGVSIGAALGSSHWDDGQRVRQRDFSASVNFTAPVTSRRSLRGSRTGVRILR) directs the protein to the chloroplast. Disordered stretches follow at residues 146-166 (NNSG…TSEV) and 187-206 (SETS…TPPQ).

It belongs to the ESV1 family. As to expression, expressed ubiquitously.

The protein resides in the plastid. The protein localises to the chloroplast stroma. Its function is as follows. Binds preferentially to highly ordered alpha-glucans, such as starch and crystalline maltodextrins. Involved in the organization of the starch granule matrix, thus influencing starch turnover by modulating the accessibility of starch polymers to modifying and degrading enzymes involved in phosphorylation, hydrolyzes and synthesis, including starch synthases (SSI and SSIII), starch phosphorylases (PHS1), isoamylase, beta-amylase, glucan water dikinase (GWD) and phosphoglucan water dikinase (PWD). The polypeptide is Protein LIKE EARLY STARVATION, chloroplastic (Arabidopsis thaliana (Mouse-ear cress)).